We begin with the raw amino-acid sequence, 255 residues long: Post-GPI attachment to proteins factor 2 (255 aa).

Helical transmembrane passes span 25 to 45, 80 to 100, 111 to 131, 143 to 163, 185 to 205, and 209 to 229; these read LAAL…SLLF, LAIF…LEYY, LGIL…CLSF, NAFV…YLLN, LFLV…RHNA, and AGVY…NMGF.

It belongs to the PGAP2 family.

The protein localises to the golgi apparatus membrane. The protein resides in the endoplasmic reticulum membrane. Its function is as follows. Involved in the lipid remodeling steps of GPI-anchor maturation. Required for stable expression of GPI-anchored proteins at the cell surface. The polypeptide is Post-GPI attachment to proteins factor 2 (Drosophila pseudoobscura pseudoobscura (Fruit fly)).